A 547-amino-acid chain; its full sequence is Beta,beta-carotene 15,15'-dioxygenase (547 aa).

4 residues coordinate Fe cation: histidine 172, histidine 237, histidine 308, and histidine 514. Positions 528-540 (QAASEEQRDRASD) are enriched in basic and acidic residues. The interval 528-547 (QAASEEQRDRASDCHGAPLT) is disordered.

The protein belongs to the carotenoid oxygenase family. It depends on Fe(2+) as a cofactor. Highly expressed in retinal pigment epithelium. Also expressed in kidney, testis, liver, brain, small intestine and colon.

The protein resides in the cytoplasm. It localises to the cytosol. The enzyme catalyses all-trans-beta-carotene + O2 = 2 all-trans-retinal. Its pathway is cofactor metabolism; retinol metabolism. Symmetrically cleaves beta-carotene into two molecules of retinal using a dioxygenase mechanism. This is Beta,beta-carotene 15,15'-dioxygenase from Homo sapiens (Human).